Here is a 611-residue protein sequence, read N- to C-terminus: Immediate-early protein 3 (611 aa).

Disordered stretches follow at residues 119 to 155 (TASH…QRLD) and 180 to 383 (EEEY…SGSD). Residues 138-151 (HSEKKAKKHKNKQR) show a composition bias toward basic residues. The Nuclear localization signal motif lies at 141-147 (KKAKKHK). Basic and acidic residues predominate over residues 198–213 (HFDERSPSRSSSDHGG). The segment covering 230–240 (SEDEDDEDDER) has biased composition (acidic residues). A compositionally biased stretch (low complexity) spans 260–277 (HGGSHSSRSSIKSSGSGS). The Nuclear localization signal motif lies at 279–285 (RHHHKRK). Positions 341–376 (PPSSGSNSNKHSSSSGGSTSSSHKKQQQQQAPSKKP) are enriched in low complexity.

The protein resides in the host nucleus. Strong transcriptional activator of the E1 promoter, shows an autoregulatory function by repression of the IE1/IE3 promoter. The IE1 protein has some additive effect on the trans-activating properties of the IE3 protein. In Mus musculus (Mouse), this protein is Immediate-early protein 3 (IE1).